The primary structure comprises 105 residues: Endogenous retrovirus group K member 8 Rec protein (105 aa).

Residues 1–48 (MNPSEMQRKAPPRRRRHRNRAPLTHKMNKMVTSEEQMKLPSTKKAEPP) form a disordered region. Over residues 10 to 20 (APPRRRRHRNR) the composition is skewed to basic residues. The short motif at 13 to 20 (RRRRHRNR) is the Nuclear localization signal element. The Nuclear export signal signature appears at 50 to 59 (WAQLKKLTQL).

Forms homodimers, homotrimers, and homotetramers via a C-terminal domain. Associates with XPO1 and with ZNF145.

Its subcellular location is the cytoplasm. It localises to the nucleus. The protein localises to the nucleolus. Retroviral replication requires the nuclear export and translation of unspliced, singly-spliced and multiply-spliced derivatives of the initial genomic transcript. Rec interacts with a highly structured RNA element (RcRE) present in the viral 3'LTR and recruits the cellular nuclear export machinery. This permits export to the cytoplasm of unspliced genomic or incompletely spliced subgenomic viral transcripts. This Homo sapiens (Human) protein is Endogenous retrovirus group K member 8 Rec protein (ERVK-8).